Here is a 293-residue protein sequence, read N- to C-terminus: Ribosomal protein L11 methyltransferase (293 aa).

S-adenosyl-L-methionine contacts are provided by threonine 145, glycine 166, aspartate 188, and asparagine 230.

The protein belongs to the methyltransferase superfamily. PrmA family.

The protein resides in the cytoplasm. It catalyses the reaction L-lysyl-[protein] + 3 S-adenosyl-L-methionine = N(6),N(6),N(6)-trimethyl-L-lysyl-[protein] + 3 S-adenosyl-L-homocysteine + 3 H(+). Its function is as follows. Methylates ribosomal protein L11. This chain is Ribosomal protein L11 methyltransferase, found in Salmonella dublin (strain CT_02021853).